Consider the following 379-residue polypeptide: Odorant receptor 33b (379 aa).

At 1–37 (MDLKPRVIRSEDIYRTYWLYWHLLGLESNFFLNRLLD) the chain is on the cytoplasmic side. Residues 38–58 (LVITIFVTIWYPIHLILGLFM) form a helical membrane-spanning segment. Residues 59-64 (ERSLGD) lie on the Extracellular side of the membrane. The helical transmembrane segment at 65-85 (VCKGLPITAACFFASFKFICF) threads the bilayer. Topologically, residues 86–129 (RFKLSEIKEIEILFKELDQRALSREECEFFNQNTRREANFIWKS) are cytoplasmic. Residues 130–150 (FIVAYGLSNISAIASVLFGGG) traverse the membrane as a helical segment. The Extracellular portion of the chain corresponds to 151 to 165 (HKLLYPAWFPYDVQA). Residues 166–186 (TELIFWLSVTYQIAGVSLAIL) form a helical membrane-spanning segment. Topologically, residues 187–256 (QNLANDSYPP…LLRSTMNISQ (70 aa)) are cytoplasmic. A helical membrane pass occupies residues 257–277 (LGQFISSGVNISITLVNILFF). The Extracellular segment spans residues 278-281 (ADNN). The chain crosses the membrane as a helical span at residues 282–302 (FAITYYGVYFLSMVLELFPCC). Topologically, residues 303 to 355 (YYGTLISVEMNQLTYAIYSSNWMSMNRSYSRILLIFMQLTLAEVQIKAGGMIG) are cytoplasmic. A helical membrane pass occupies residues 356-376 (IGMNAFFATVRLAYSFFTLAM). Residues 377-379 (SLR) lie on the Extracellular side of the membrane.

It belongs to the insect chemoreceptor superfamily. Heteromeric odorant receptor channel (TC 1.A.69) family. Or2a subfamily. In terms of assembly, interacts with Orco. Complexes exist early in the endomembrane system in olfactory sensory neurons (OSNs), coupling these complexes to the conserved ciliary trafficking pathway. In terms of tissue distribution, expressed in 15 cells in the antenna but not the maxillary palp.

It localises to the cell membrane. Functionally, odorant receptor which mediates acceptance or avoidance behavior, depending on its substrates. The odorant receptor repertoire encodes a large collection of odor stimuli that vary widely in identity, intensity, and duration. May form a complex with Orco to form odorant-sensing units, providing sensitive and prolonged odorant signaling and calcium permeability. Involved in the behavioral responses to pentyl acetate and pyrazines. The sequence is that of Odorant receptor 33b (Or33b) from Drosophila melanogaster (Fruit fly).